We begin with the raw amino-acid sequence, 360 residues long: Cyclin-Y-like protein 2 (360 aa).

One can recognise a Cyclin N-terminal domain in the interval 204 to 286; it reads RLTAEFAIVS…FLKLINYNIG (83 aa).

Belongs to the cyclin family. Cyclin Y subfamily.

The polypeptide is Cyclin-Y-like protein 2 (CCNYL2) (Macaca fascicularis (Crab-eating macaque)).